The sequence spans 475 residues: Argininosuccinate lyase (475 aa).

It belongs to the lyase 1 family. Argininosuccinate lyase subfamily.

It is found in the cytoplasm. The enzyme catalyses 2-(N(omega)-L-arginino)succinate = fumarate + L-arginine. It functions in the pathway amino-acid biosynthesis; L-arginine biosynthesis; L-arginine from L-ornithine and carbamoyl phosphate: step 3/3. The protein is Argininosuccinate lyase of Streptomyces coelicolor (strain ATCC BAA-471 / A3(2) / M145).